We begin with the raw amino-acid sequence, 62 residues long: Conotoxin Im5.1 (62 aa).

Positions M1 to S19 are cleaved as a signal peptide. A propeptide spanning residues T20–N48 is cleaved from the precursor. W60 is modified (tryptophan amide).

The protein belongs to the conotoxin T superfamily. In terms of processing, contains 2 disulfide bonds that can be either 'C1-C3, C2-C4' or 'C1-C4, C2-C3', since these disulfide connectivities have been observed for conotoxins with cysteine framework V (for examples, see AC P0DQQ7 and AC P81755). As to expression, expressed by the venom duct.

The protein resides in the secreted. This Conus imperialis (Imperial cone) protein is Conotoxin Im5.1.